A 235-amino-acid polypeptide reads, in one-letter code: Ribosomal RNA small subunit methyltransferase G (235 aa).

S-adenosyl-L-methionine-binding positions include glycine 74, phenylalanine 79, 97–99, 125–126, and arginine 144; these read EAT and AE.

It belongs to the methyltransferase superfamily. RNA methyltransferase RsmG family.

It localises to the cytoplasm. In terms of biological role, specifically methylates the N7 position of a guanine in 16S rRNA. The polypeptide is Ribosomal RNA small subunit methyltransferase G (Dehalococcoides mccartyi (strain ATCC BAA-2100 / JCM 16839 / KCTC 5957 / BAV1)).